The following is a 708-amino-acid chain: Killer toxin KHS (708 aa).

The first 27 residues, 1 to 27 (MPRFAIIFALLIAYSLFLSTLFTGSIP), serve as a signal peptide directing secretion. Residues 28–36 (DRANTVTSN) constitute a propeptide that is removed on maturation. Helical transmembrane passes span 77–97 (VCTI…AVLV), 380–400 (IMMK…IYVI), and 466–486 (NIIY…VIVH).

It to yeast YER187w. As to quaternary structure, monomer.

It is found in the cell membrane. Functionally, kills sensitive strains of yeast. This is Killer toxin KHS (KHS1) from Saccharomyces cerevisiae (Baker's yeast).